Here is a 436-residue protein sequence, read N- to C-terminus: 3-ketoacyl-CoA thiolase (436 aa).

Cys-99 functions as the Acyl-thioester intermediate in the catalytic mechanism. Catalysis depends on proton acceptor residues His-392 and Cys-422.

It belongs to the thiolase-like superfamily. Thiolase family. As to quaternary structure, heterotetramer of two alpha chains (FadJ) and two beta chains (FadI).

The protein resides in the cytoplasm. The enzyme catalyses an acyl-CoA + acetyl-CoA = a 3-oxoacyl-CoA + CoA. Its pathway is lipid metabolism; fatty acid beta-oxidation. Functionally, catalyzes the final step of fatty acid oxidation in which acetyl-CoA is released and the CoA ester of a fatty acid two carbons shorter is formed. This chain is 3-ketoacyl-CoA thiolase, found in Salmonella choleraesuis (strain SC-B67).